A 512-amino-acid chain; its full sequence is Ribonuclease Y (512 aa).

Residues 3-23 (FQIILVVIISALVGLVIGFFI) traverse the membrane as a helical segment. One can recognise a KH domain in the interval 202–265 (TVAVIPLPND…EVARLALERL (64 aa)). In terms of domain architecture, HD spans 328 to 421 (VLKHSIEVCH…VQAADAISAA (94 aa)).

Belongs to the RNase Y family.

Its subcellular location is the cell membrane. In terms of biological role, endoribonuclease that initiates mRNA decay. This chain is Ribonuclease Y, found in Desulforamulus reducens (strain ATCC BAA-1160 / DSM 100696 / MI-1) (Desulfotomaculum reducens).